Here is a 187-residue protein sequence, read N- to C-terminus: MSALQTSPINLDLDLAFHPANDDALTSLVDADTKRRLTHASPWQQDLTAWIESVRRDPTLTCPEIVRLSPMLSLGLQLTDDATITELNHSWRQRSESTDVLSFPALDNSLVLPTDTCVELGDIVVSVQTAQRQAKQHSHELGLELRWLVSHGLLHLLGWDHPTDQSLKTMLSYQEQLLSINGKVHHH.

Zn(2+)-binding residues include H151, H155, and H161.

The protein belongs to the endoribonuclease YbeY family. The cofactor is Zn(2+).

Its subcellular location is the cytoplasm. In terms of biological role, single strand-specific metallo-endoribonuclease involved in late-stage 70S ribosome quality control and in maturation of the 3' terminus of the 16S rRNA. This Prochlorococcus marinus (strain MIT 9313) protein is Endoribonuclease YbeY.